A 453-amino-acid chain; its full sequence is Beta-agarase AgaB34 (453 aa).

An N-terminal signal peptide occupies residues 1-23 (MKGFTKHSILMACSIGLAINATA). Positions 24–301 (ADWDNIPIPA…WIRVYKPTGG (278 aa)) constitute a GH16 domain. The Nucleophile role is filled by Glu-147. The active-site Proton donor is Glu-152. The Ricin B-type lectin domain maps to 313-453 (PSGYTNLQLA…GATNQRFKFL (141 aa)). 3 cysteine pairs are disulfide-bonded: Cys-327–Cys-346, Cys-375–Cys-394, and Cys-423–Cys-442.

Belongs to the glycosyl hydrolase 16 family.

It is found in the secreted. The enzyme catalyses Hydrolysis of (1-&gt;4)-beta-D-galactosidic linkages in agarose, giving the tetramer as the predominant product.. This is Beta-agarase AgaB34 from Agarivorans albus.